Here is a 208-residue protein sequence, read N- to C-terminus: Large ribosomal subunit protein uL3 (208 aa).

The residue at position 149 (Q149) is an N5-methylglutamine.

It belongs to the universal ribosomal protein uL3 family. Part of the 50S ribosomal subunit. Forms a cluster with proteins L14 and L19. Methylated by PrmB.

In terms of biological role, one of the primary rRNA binding proteins, it binds directly near the 3'-end of the 23S rRNA, where it nucleates assembly of the 50S subunit. The polypeptide is Large ribosomal subunit protein uL3 (Haemophilus influenzae (strain 86-028NP)).